A 199-amino-acid polypeptide reads, in one-letter code: Recombination protein RecR (199 aa).

A C4-type zinc finger spans residues 57-72 (CQSCRTFTEQDLCPIC). Positions 81–176 (GIICVVETPA…VISRIAHGVP (96 aa)) constitute a Toprim domain.

It belongs to the RecR family.

Its function is as follows. May play a role in DNA repair. It seems to be involved in an RecBC-independent recombinational process of DNA repair. It may act with RecF and RecO. This chain is Recombination protein RecR, found in Shewanella frigidimarina (strain NCIMB 400).